Reading from the N-terminus, the 176-residue chain is Zinc finger protein 428 (176 aa).

The disordered stretch occupies residues 1-152 (MTETREPTET…EEEGGTYHCT (152 aa)). Residues 16–46 (LEEDDEDLSPEPDSEEEEEEEEEETTDDPEY) show a composition bias toward acidic residues. Thr96 is modified (phosphothreonine). Basic and acidic residues predominate over residues 126-138 (PSRTGETRPAGRD). The C2H2-type zinc-finger motif lies at 149 to 171 (YHCTECEDSFDNLGELHGHFMLH).

In Mus musculus (Mouse), this protein is Zinc finger protein 428 (Znf428).